The primary structure comprises 400 residues: Acetate kinase (400 aa).

N10 contacts Mg(2+). K17 serves as a coordination point for ATP. R91 contributes to the substrate binding site. Catalysis depends on D150, which acts as the Proton donor/acceptor. Residues 210–214, 285–287, and 333–337 each bind ATP; these read HLGNG, DCR, and GIGEN. Residue E387 participates in Mg(2+) binding.

The protein belongs to the acetokinase family. As to quaternary structure, homodimer. The cofactor is Mg(2+). It depends on Mn(2+) as a cofactor.

It is found in the cytoplasm. It catalyses the reaction acetate + ATP = acetyl phosphate + ADP. The protein operates within metabolic intermediate biosynthesis; acetyl-CoA biosynthesis; acetyl-CoA from acetate: step 1/2. Its function is as follows. Catalyzes the formation of acetyl phosphate from acetate and ATP. Can also catalyze the reverse reaction. In Yersinia pseudotuberculosis serotype I (strain IP32953), this protein is Acetate kinase.